The following is a 351-amino-acid chain: MLINGVIIMEMDKRKIKILQAIIHDYIQTAEPVGSRTIAKKYDLGVSSATIRNEMSDLEDMGYLEQLHSSSGRKPSDKGYRLYVDKLMNIQKLSSMEECAIKTHIINSALYEIEKVVREASAILADLTKLTTVVMSPSSIESYIKSIQLIGLDANTVLLVLVIDTGIIKNNVIKLHAKMTIDELVKINRILNIKLNKIRVESINLDFLKVVLEEFKDYEKWLKDILPVLYETLLSGIDSNEIYLEGATNIFNYPEYNDIQRAKDFLSLIDDKDKVKNLIKSDDNITIKIGKENFIEDAKDCTIITAVYKLKDRPLGTIGVIGPTRMPYSRVVSILSTLVDELDKLLKDDNI.

It belongs to the HrcA family.

In terms of biological role, negative regulator of class I heat shock genes (grpE-dnaK-dnaJ and groELS operons). Prevents heat-shock induction of these operons. This chain is Heat-inducible transcription repressor HrcA, found in Clostridium tetani (strain Massachusetts / E88).